We begin with the raw amino-acid sequence, 221 residues long: Endonuclease V (221 aa).

The Mg(2+) site is built by aspartate 43 and aspartate 109.

This sequence belongs to the endonuclease V family. It depends on Mg(2+) as a cofactor.

It is found in the cytoplasm. It catalyses the reaction Endonucleolytic cleavage at apurinic or apyrimidinic sites to products with a 5'-phosphate.. Its function is as follows. DNA repair enzyme involved in the repair of deaminated bases. Selectively cleaves double-stranded DNA at the second phosphodiester bond 3' to a deoxyinosine leaving behind the intact lesion on the nicked DNA. The polypeptide is Endonuclease V (Petrotoga mobilis (strain DSM 10674 / SJ95)).